Consider the following 1767-residue polypeptide: Trans-Golgi network-localized SYP41-interacting protein 1 (1767 aa).

The interval 1-72 (MHEKDDLPQD…LTTDDDDNDD (72 aa)) is disordered. Residues 1–1748 (MHEKDDLPQD…RVLMSRPQAR (1748 aa)) lie on the Cytoplasmic side of the membrane. Over residues 16 to 32 (IENDDESNGQEEEELDP) the composition is skewed to acidic residues. Coiled coils occupy residues 276–436 (LSHL…MSTA), 493–516 (VRSLAEERKELTNVSQEYNRLKDL), 570–590 (KSNIRKELDDLSFSLKKMEET), 684–805 (VSNL…LQQS), and 845–1082 (IQEV…LSSK). The span at 1177-1190 (DNSVNTEPENSQGS) shows a compositional bias: polar residues. Residues 1177–1198 (DNSVNTEPENSQGSAADEDEIS) form a disordered region. Coiled coils occupy residues 1251–1310 (NSSL…FQEN), 1362–1424 (IRDM…WHEK), 1522–1542 (LKKATEAESTTELELVKAKNE), and 1603–1630 (LAGSEKLVDKLSLRVKEFEEKLQTKAIQ). The chain crosses the membrane as a helical; Anchor for type IV membrane protein span at residues 1749-1766 (LGVMVYSLLLHLWLLASI). Residue Leu-1767 is a topological domain, vesicular.

In terms of assembly, interacts with SYP41. As to expression, expressed ubiquitously in roots, leaves and flowers, and, to a lower extent, in stems.

It is found in the golgi apparatus. The protein resides in the trans-Golgi network membrane. Tethering factor involved in vesicle fusion at the trans-Golgi network (TGN) thus being required for efficient protein trafficking to the vacuole. Implicated in resistance to salt and osmotic stresses. Modulates the cell morphology (e.g. epidermal cell file rotation (CFR) and cell expansion) in mature regions of roots and the base of hypocotyls as well as root skewing, a process leading to root movement within the soil in order to maximize anchorage and nutrient acquisition, probably by regulating microtubule stabilization independently of their orientation. The sequence is that of Trans-Golgi network-localized SYP41-interacting protein 1 from Arabidopsis thaliana (Mouse-ear cress).